The sequence spans 1088 residues: Methionine S-methyltransferase (1088 aa).

This sequence belongs to the class I-like SAM-binding methyltransferase superfamily. Homotetramer. Expressed in the shoot, scutellum, and aleurone cells but not in the root or endosperm.

It localises to the cytoplasm. It catalyses the reaction L-methionine + S-adenosyl-L-methionine = S-methyl-L-methionine + S-adenosyl-L-homocysteine. Catalyzes the S-methylmethionine (SMM) biosynthesis from adenosyl-L-homocysteine (AdoMet) and methionine. SMM biosynthesis (by MMT1) and degradation (by HMT-1, HMT-2 and HMT-3) constitute the SMM cycle in plants, which is probably required to achieve short term control of AdoMet level. Also able to catalyze the selenium-methylmethionine (SeMM) from AdoMet and selenium-methionine (SeMet). May play a role in phoem sulfur transport; such function is however not essential. This is Methionine S-methyltransferase (MMT1) from Hordeum vulgare (Barley).